A 359-amino-acid chain; its full sequence is Fc receptor-like A (359 aa).

The N-terminal stretch at 1-27 (MKLGCVLMAWALYLSLGVLWVAQMLLA) is a signal peptide. 2 Ig-like C2-type domains span residues 70 to 159 (PFHL…ETAS) and 170 to 257 (PAPI…PQLE). Cystine bridges form between cysteine 99–cysteine 143 and cysteine 192–cysteine 240. The tract at residues 259–313 (RVQGASSSAAPPTLNPAPQKSAAPGTAPEEAPGPLPPPPTPSSEDPGFSSPLGMP) is disordered. Residues 279–288 (SAAPGTAPEE) are compositionally biased toward low complexity. The span at 289–299 (APGPLPPPPTP) shows a compositional bias: pro residues.

As to quaternary structure, monomer or homodimer; disulfide-linked. Expressed specifically in primary and secondary lymphoid tissues like lymph node, spleen and tonsil. Specifically expressed in B-cells with a high level in normal germinal center B-cells, centroblasts and in a subset of diffuse large B-cell lymphomas. Highly expressed in bone marrow B-cells and weakly in earlier B lineage cells. Expressed in pre-germinal and germinal center B-cells in secondary lymphoid tissues. Also expressed in melanoma and melanocytes.

Its subcellular location is the cytoplasm. Its function is as follows. May be implicated in B-cell differentiation and lymphomagenesis. The sequence is that of Fc receptor-like A (FCRLA) from Homo sapiens (Human).